The following is a 339-amino-acid chain: AB hydrolase superfamily protein B1A11.02 (339 aa).

It belongs to the AB hydrolase superfamily.

This Schizosaccharomyces pombe (strain 972 / ATCC 24843) (Fission yeast) protein is AB hydrolase superfamily protein B1A11.02.